The primary structure comprises 22 residues: Lantibiotic mutacin B-Ny266 (22 aa).

Positions 3–7 (SWSFC) form a cross-link, lanthionine (Ser-Cys). The residue at position 5 (Ser-5) is a 2,3-didehydroalanine (Ser). The beta-methyllanthionine (Thr-Cys) cross-link spans 8-11 (TPGC). Thr-14 carries the 2,3-didehydrobutyrine modification. The segment at residues 16–21 (SFNSYC) is a cross-link (lanthionine (Ser-Cys)). The S-(2-aminovinyl)-D-cysteine (Ser-Cys) cross-link spans 19 to 22 (SYCC).

In terms of processing, maturation of lantibiotics involves the enzymatic conversion of Thr, and Ser into dehydrated AA and the formation of thioether bonds with cysteine. The C-terminal lanthionine undergoes decarboxylation. This is followed by membrane translocation and cleavage of the modified precursor. It is not established whether the 2,3-didehydrobutyrine is the E- or Z-isomer.

Functionally, lanthionine-containing peptide antibiotic (lantibiotic) active on Gram-positive bacteria. The bactericidal activity of lantibiotics is based on depolarization of energized bacterial cytoplasmic membranes, initiated by the formation of aqueous transmembrane pores. The polypeptide is Lantibiotic mutacin B-Ny266 (Streptococcus mutans).